Here is a 58-residue protein sequence, read N- to C-terminus: Potassium channel toxin Ts16 (58 aa).

The signal sequence occupies residues 1 to 16 (MHSSVFILILFSLAVI). 3 disulfides stabilise this stretch: cysteine 29–cysteine 51, cysteine 34–cysteine 47, and cysteine 38–cysteine 53.

As to expression, expressed by the venom gland.

The protein resides in the secreted. Its function is as follows. Blocks potassium channels. The polypeptide is Potassium channel toxin Ts16 (Tityus serrulatus (Brazilian scorpion)).